The chain runs to 89 residues: Large ribosomal subunit protein uL24 (89 aa).

This sequence belongs to the universal ribosomal protein uL24 family. Part of the 50S ribosomal subunit.

In terms of biological role, one of two assembly initiator proteins, it binds directly to the 5'-end of the 23S rRNA, where it nucleates assembly of the 50S subunit. Its function is as follows. One of the proteins that surrounds the polypeptide exit tunnel on the outside of the subunit. This chain is Large ribosomal subunit protein uL24, found in Chlorobium chlorochromatii (strain CaD3).